The chain runs to 228 residues: MKFAVIVFPGSNCDVDMYHAIADELGEEVEYVWHDEENLDRFDAILLPGGFSYGDYLRSGAIARFSKVMAAVKQAAEAGKPVLGVCNGFQILLEAGLLPGAMRRNQGLKFICRPVQLVVENNETMFTSAYGKDEVITIPIAHGEGNYYCDEQTLNRLVENRQIVFRYHGENPNGSLADIAGIVNERGNVLGMMPHPERAVDALLGSADGLKLFRSIVNYWRETHVVTA.

The Glutamine amidotransferase type-1 domain maps to 3–226 (FAVIVFPGSN…VNYWRETHVV (224 aa)). Cysteine 86 (nucleophile) is an active-site residue. Residues histidine 195 and glutamate 197 contribute to the active site.

In terms of assembly, part of the FGAM synthase complex composed of 1 PurL, 1 PurQ and 2 PurS subunits.

The protein localises to the cytoplasm. It carries out the reaction N(2)-formyl-N(1)-(5-phospho-beta-D-ribosyl)glycinamide + L-glutamine + ATP + H2O = 2-formamido-N(1)-(5-O-phospho-beta-D-ribosyl)acetamidine + L-glutamate + ADP + phosphate + H(+). The catalysed reaction is L-glutamine + H2O = L-glutamate + NH4(+). It functions in the pathway purine metabolism; IMP biosynthesis via de novo pathway; 5-amino-1-(5-phospho-D-ribosyl)imidazole from N(2)-formyl-N(1)-(5-phospho-D-ribosyl)glycinamide: step 1/2. In terms of biological role, part of the phosphoribosylformylglycinamidine synthase complex involved in the purines biosynthetic pathway. Catalyzes the ATP-dependent conversion of formylglycinamide ribonucleotide (FGAR) and glutamine to yield formylglycinamidine ribonucleotide (FGAM) and glutamate. The FGAM synthase complex is composed of three subunits. PurQ produces an ammonia molecule by converting glutamine to glutamate. PurL transfers the ammonia molecule to FGAR to form FGAM in an ATP-dependent manner. PurS interacts with PurQ and PurL and is thought to assist in the transfer of the ammonia molecule from PurQ to PurL. This chain is Phosphoribosylformylglycinamidine synthase subunit PurQ, found in Geobacillus thermodenitrificans (strain NG80-2).